The primary structure comprises 208 residues: Uracil phosphoribosyltransferase (208 aa).

Residues Arg-78, Arg-103, and 130 to 138 contribute to the 5-phospho-alpha-D-ribose 1-diphosphate site; that span reads DPMLATGGS. Uracil contacts are provided by residues Ile-193 and 198–200; that span reads GDA. Asp-199 is a binding site for 5-phospho-alpha-D-ribose 1-diphosphate.

Belongs to the UPRTase family. The cofactor is Mg(2+).

It catalyses the reaction UMP + diphosphate = 5-phospho-alpha-D-ribose 1-diphosphate + uracil. It participates in pyrimidine metabolism; UMP biosynthesis via salvage pathway; UMP from uracil: step 1/1. Its activity is regulated as follows. Allosterically activated by GTP. Functionally, catalyzes the conversion of uracil and 5-phospho-alpha-D-ribose 1-diphosphate (PRPP) to UMP and diphosphate. This chain is Uracil phosphoribosyltransferase, found in Actinobacillus succinogenes (strain ATCC 55618 / DSM 22257 / CCUG 43843 / 130Z).